We begin with the raw amino-acid sequence, 269 residues long: Eukaryotic translation initiation factor 3 subunit G (269 aa).

A disordered region spans residues 140 to 181; it reads AIGGGDMSAQGGSGSGRYVPPSLRAGARDPSSNAYQDQRERD. Positions 141-154 are enriched in gly residues; sequence IGGGDMSAQGGSGS. Ser161 carries the phosphoserine modification. Residues 184–263 form the RRM domain; it reads KTIRLTQVNE…FMLHAEWSKP (80 aa).

The protein belongs to the eIF-3 subunit G family. In terms of assembly, component of the eukaryotic translation initiation factor 3 (eIF-3) complex.

It localises to the cytoplasm. Its function is as follows. RNA-binding component of the eukaryotic translation initiation factor 3 (eIF-3) complex, which is involved in protein synthesis of a specialized repertoire of mRNAs and, together with other initiation factors, stimulates binding of mRNA and methionyl-tRNAi to the 40S ribosome. The eIF-3 complex specifically targets and initiates translation of a subset of mRNAs involved in cell proliferation. This subunit can bind 18S rRNA. This Kluyveromyces lactis (strain ATCC 8585 / CBS 2359 / DSM 70799 / NBRC 1267 / NRRL Y-1140 / WM37) (Yeast) protein is Eukaryotic translation initiation factor 3 subunit G.